The sequence spans 123 residues: Anti-lipopolysaccharide factor (123 aa).

The first 26 residues, 1–26, serve as a signal peptide directing secretion; sequence MRTRVMAGLCVALVVMCLYMPQPCEA. A disulfide bridge links C55 with C76.

As to expression, strong expression in hemocytes, heart and muscle, with weaker expression detected in gills and hepatopancreas. No expression detected in eyes.

It localises to the secreted. Its function is as follows. Binds to bacterial LPS and may specifically inhibit the LPS-mediated activation of the hemolymph coagulation. It has a strong antibacterial effect especially on the growth of Gram-negative bacteria. This Scylla serrata (Mud crab) protein is Anti-lipopolysaccharide factor.